Here is a 515-residue protein sequence, read N- to C-terminus: Methionine--tRNA ligase (515 aa).

A 'HIGH' region motif is present at residues 13-23 (AYPNGKPHIGH). The short motif at 300–304 (KMSKS) is the 'KMSKS' region element. Position 303 (K303) interacts with ATP.

The protein belongs to the class-I aminoacyl-tRNA synthetase family. MetG type 2B subfamily. As to quaternary structure, monomer.

The protein localises to the cytoplasm. The enzyme catalyses tRNA(Met) + L-methionine + ATP = L-methionyl-tRNA(Met) + AMP + diphosphate. Is required not only for elongation of protein synthesis but also for the initiation of all mRNA translation through initiator tRNA(fMet) aminoacylation. The sequence is that of Methionine--tRNA ligase from Brucella suis biovar 1 (strain 1330).